The sequence spans 415 residues: Peptide chain release factor subunit 1-2 (415 aa).

It belongs to the eukaryotic release factor 1 family. In terms of assembly, heterodimer of two subunits, one of which binds GTP.

It is found in the cytoplasm. Functionally, directs the termination of nascent peptide synthesis (translation) in response to the termination codons UAA, UAG and UGA. This chain is Peptide chain release factor subunit 1-2, found in Methanosarcina acetivorans (strain ATCC 35395 / DSM 2834 / JCM 12185 / C2A).